We begin with the raw amino-acid sequence, 682 residues long: ATP-dependent DNA helicase RecG (682 aa).

A wedge domain region spans residues 46–139 (ELRDLEEVKH…LKNGPHQEDK (94 aa)). Residues 271–432 (DMSSPYRMNR…VFGEMDVSVI (162 aa)) form the Helicase ATP-binding domain. 284 to 291 (GDVGSGKT) is an ATP binding site. A DEAH box motif is present at residues 385–388 (DEQH). The Helicase C-terminal domain occupies 451 to 611 (MLDRILAFVE…GFELSEKDLE (161 aa)).

It belongs to the helicase family. RecG subfamily. As to quaternary structure, monomer. Interacts with SSB (sbbA), via the latter's 6 C-terminal residues. Colocalizes with DNA pol III subunit gamma/tau (dnaX).

The protein resides in the cytoplasm. The protein localises to the nucleoid. It catalyses the reaction Couples ATP hydrolysis with the unwinding of duplex DNA by translocating in the 3'-5' direction.. It carries out the reaction ATP + H2O = ADP + phosphate + H(+). With respect to regulation, replication fork regression on Holliday junctions (HJ) is inhibited by DisA; DisA inhibits the ATPase activity of RecG. Functionally, critical role in recombination and DNA repair. Helps process Holliday junction intermediates to mature products by catalyzing branch migration. Has a DNA unwinding activity characteristic of a DNA helicase with 3'-5' polarity. Unwinds branched duplex DNA (Y-DNA), Holliday junction (HJ) DNA and partially replicated forks as well as catalyzing fork reversal/regression. Does not seem to unwind R-loops. Inhibits the diadenylate cyclase (DAC) activity of DisA in the presence but not absence of HJ DNA, possibly by relocating DisA from the junction. This Bacillus subtilis (strain 168) protein is ATP-dependent DNA helicase RecG.